Here is a 452-residue protein sequence, read N- to C-terminus: GTPase Der (452 aa).

EngA-type G domains lie at 9–170 (KIIA…PEED) and 185–362 (LQIV…KTWN). GTP is bound by residues 15–22 (GRPNVGKS), 62–66 (DTPGF), 124–127 (NKCE), 191–198 (GRPNAGKS), 238–242 (DTAGL), and 303–306 (NKWD). One can recognise a KH-like domain in the interval 363–448 (KKITTSKLNE…PIRFNYIKTK (86 aa)).

This sequence belongs to the TRAFAC class TrmE-Era-EngA-EngB-Septin-like GTPase superfamily. EngA (Der) GTPase family. As to quaternary structure, associates with the 50S ribosomal subunit.

In terms of biological role, GTPase that plays an essential role in the late steps of ribosome biogenesis. The polypeptide is GTPase Der (Rickettsia bellii (strain OSU 85-389)).